The primary structure comprises 1051 residues: MFVFIYCLQADDKSLLARFYHADRSLTAVASELDSFDGRAEPDRCTRLVSRLRQNQDKVLAITNLIMEELLGDERDPRAFRAKFPEEVLQDNLAGQLWFGAECLAAGSSILNRESESKEMRPLAQAVTKSLGNVRVLLRDQCLRNNVPNSKTLHLDFNDSTTEQLYESLKIFDHLFAEFELSYVSAMVPVKSRHEYEMQQWIGVLFSETLQRALKIGLLEQEMVDAFDPGLMFSIPRLAIVAGLVVFTKGPLNMDMPGDELSEMFRPFRTILIKIRDLLRNLSKQELHQLEKLLCTNEEINTNVPLGSSSIEAPSPEHNNTSSSTSNNNNNNNNNSSSSSSSSSGSGSNTAKTSTSSTHKAVERLVDHRNNNSSTVAGATQPSTARSPSMLSLSAGSTPTASPAPSPTPSHSIASTSSAATTSTNPPANWSDYDEDDEDLEEEVGMLDSDEDDLNDDSDDDIEVDEYIEAQLKAIVAAADCASGYLIPNTNLGNLFQAQQLPLTDNFVASEDDEFGSNAATERQQQQQHMDELQPGDQQQQQQQLQDEPSTSAAMLAAQRTLQRLHLPSSSSENEQAPSSNQQTTIKTPNGNQSMPNSSSSSSNHNNNRHRHSHSHSHSSHHHHHHHRHHHHTHPHHQQQQEQRLQAADHHHHHHHHHQSHPHRINRSARKRCSQEHWESTANAEQPAPEQTPGSADTSNASSFSDEVSLAMRSTTARLKFKSTENLLHRLFVCIAGVADQLQTNFASDLRQILRSVFLINMSSSQDEDIDIPEKTKESELFEFRASENDVIQESAGSNQSIYSAEEVNPELDNVFNNTNAAVRHSAGAAMQRNNTIDLASGNNNGNSNAAARNHVARSRSLGDQEAAGSGTRQDEQRQQQQQQQQQLQQQLQMQRQRNNSVGSNSPSSASSSSSSSEHNSPISTRSGSRRRLHSNSSIGTTSTITPSTAAATATTMSPPAWIPDGKAPRCMSCQTPFTAFRRRHHCRNCGGVFCGVCSNASAPLPKYGLTKAVRVCRECYVREVRSSRQAPAQPSQAHGQASRPQAASAS.

Disordered regions lie at residues P305–L440, G516–S552, H566–S703, and I837–A968. The segment covering N319–T358 has biased composition (low complexity). Over residues K360–N370 the composition is skewed to basic and acidic residues. The segment covering N371–L391 has biased composition (polar residues). Composition is skewed to low complexity over residues S392–A401 and P409–A428. Residues N518–Q528 show a composition bias toward polar residues. Low complexity-rich tracts occupy residues L533 to P549 and P568 to Q582. 2 positions are modified to phosphoserine: S569 and S570. The span at Q583–P596 shows a compositional bias: polar residues. Positions N597–N606 are enriched in low complexity. 2 stretches are compositionally biased toward basic residues: residues N607–H637 and H650–R672. Residues T692–S703 are compositionally biased toward polar residues. A compositionally biased stretch (low complexity) spans A840–A852. A Phosphoserine modification is found at S861. 2 stretches are compositionally biased toward low complexity: residues Q879–S924 and S937–P960. Residues D965–V1025 form an FYVE-type zinc finger. Zn(2+) is bound by residues C971, C974, C987, C990, C995, C998, C1017, and C1020. The disordered stretch occupies residues S1028–S1051.

Belongs to the lst-2 family.

Its function is as follows. Negative regulator of epidermal growth factor receptor (EGFR) signaling. In Drosophila mojavensis (Fruit fly), this protein is Lateral signaling target protein 2 homolog.